A 442-amino-acid polypeptide reads, in one-letter code: Sexual development regulator VELC (442 aa).

Disordered regions lie at residues 1–192 (MPVH…ASLA) and 396–442 (KKGN…IRRS). Residues 45–54 (IAPPPPPTPP) are compositionally biased toward pro residues. Over residues 79–97 (PGPRRPSNPSSPQHPQQPG) the composition is skewed to low complexity. Residues 213–396 (FSTSEYHLHV…KEQGCLISIK (184 aa)) form the Velvet domain. The span at 401–411 (KGGGGGGGGPS) shows a compositional bias: gly residues. Residues 433–442 (AGKRKRIRRS) show a composition bias toward basic residues.

It belongs to the velvet family. VelC subfamily.

It localises to the nucleus. In terms of biological role, velvet-domain-containing protein that acts as a positive regulator of sexual development. Plays an important role in pathogenicity through regulating positively appressorium-mediated penetration and invasive growth. The polypeptide is Sexual development regulator VELC (Pyricularia oryzae (strain 70-15 / ATCC MYA-4617 / FGSC 8958) (Rice blast fungus)).